The sequence spans 208 residues: Thymidylate kinase (208 aa).

7 to 14 (GIDGSGKS) contributes to the ATP binding site.

The protein belongs to the thymidylate kinase family.

It carries out the reaction dTMP + ATP = dTDP + ADP. In terms of biological role, phosphorylation of dTMP to form dTDP in both de novo and salvage pathways of dTTP synthesis. The polypeptide is Thymidylate kinase (Kosmotoga olearia (strain ATCC BAA-1733 / DSM 21960 / TBF 19.5.1)).